The primary structure comprises 628 residues: Biosynthetic arginine decarboxylase (628 aa).

N6-(pyridoxal phosphate)lysine is present on Lys-99. A substrate-binding site is contributed by 279–289 (VDVGGGLGIDY).

Belongs to the Orn/Lys/Arg decarboxylase class-II family. SpeA subfamily. The cofactor is Mg(2+). It depends on pyridoxal 5'-phosphate as a cofactor.

The enzyme catalyses L-arginine + H(+) = agmatine + CO2. Its function is as follows. Catalyzes the biosynthesis of agmatine from arginine. The sequence is that of Biosynthetic arginine decarboxylase from Xanthomonas campestris pv. campestris (strain ATCC 33913 / DSM 3586 / NCPPB 528 / LMG 568 / P 25).